Consider the following 924-residue polypeptide: Cell division control protein 13 (924 aa).

A disordered region spans residues 265 to 336; that stretch reads PTTDISNMGE…KRKRKLSFHS (72 aa). The segment covering 295-308 has biased composition (polar residues); the sequence is GKYFSSKSYIQSQT. Phosphoserine is present on Ser-306. Thr-308 is subject to Phosphothreonine. Basic and acidic residues predominate over residues 309–326; that stretch reads PERKTSVPNNWHDDDSGS. The residue at position 333 (Ser-333) is a Phosphoserine. The OB DNA-binding region spans 500–686; that stretch reads KMARKDPTIE…FEEYRRFFPI (187 aa).

In terms of assembly, interacts with POL1, EST1, FUN12, STM1, STN1 and TEN1.

Its subcellular location is the chromosome. The protein resides in the telomere. Functionally, single-stranded telomeric DNA-binding protein that regulates telomere replication. Has a role in both positive and negative regulation. Promotes [TG(1-3)] strand lengthening via interaction with EST1. Promotes [C(1-3)A] strand re-synthesis by DNA polymerase alpha via interaction with POL1. Negatively regulates telomere elongation of the G strand via binding with STN1 thereby inhibiting telomerase activity. This is Cell division control protein 13 (CDC13) from Saccharomyces cerevisiae (strain ATCC 204508 / S288c) (Baker's yeast).